The following is a 205-amino-acid chain: Ras-related protein RABD1 (205 aa).

Ser2 is modified (N-acetylserine). Residues 15 to 23 (GDSSVGKSC), 33 to 40 (YIDSYIST), 63 to 67 (DTAGQ), 121 to 124 (NKND), and 151 to 153 (SAK) each bind GTP. Positions 37 to 45 (YISTIGVDF) match the Effector region motif. Polar residues-rich tracts occupy residues 174-186 (GSQT…SGPG) and 194-205 (PIQQNNGGCCGQ). Positions 174-205 (GSQTNANKTSGPGTVQMKGQPIQQNNGGCCGQ) are disordered. Residues Cys202 and Cys203 are each lipidated (S-geranylgeranyl cysteine).

It belongs to the small GTPase superfamily. Rab family. In terms of assembly, does not interact with GC5. Interacts with XI-2/MYA2.

The protein localises to the golgi apparatus. Its subcellular location is the trans-Golgi network membrane. The protein resides in the golgi apparatus membrane. Functionally, protein transport. Regulator of membrane traffic from the Golgi apparatus towards the endoplasmic reticulum (ER). The polypeptide is Ras-related protein RABD1 (RABD1) (Arabidopsis thaliana (Mouse-ear cress)).